The chain runs to 374 residues: Peptide chain release factor 2 (374 aa).

Glutamine 254 carries the N5-methylglutamine modification.

It belongs to the prokaryotic/mitochondrial release factor family. In terms of processing, methylated by PrmC. Methylation increases the termination efficiency of RF2.

The protein localises to the cytoplasm. In terms of biological role, peptide chain release factor 2 directs the termination of translation in response to the peptide chain termination codons UGA and UAA. This chain is Peptide chain release factor 2, found in Renibacterium salmoninarum (strain ATCC 33209 / DSM 20767 / JCM 11484 / NBRC 15589 / NCIMB 2235).